We begin with the raw amino-acid sequence, 446 residues long: Transcription factor Sox-10 (446 aa).

3 disordered regions span residues 1–60, 153–191, and 203–264; these read MSDD…SEDE, RLRMQHKKDHPDYKYQPRRRKNGKPSPGEGDGSSEAEGG, and HLDH…IDFG. Residues 36-48 show a composition bias toward acidic residues; the sequence is DDDDDDDEEEEEE. K52 is covalently cross-linked (Glycyl lysine isopeptide (Lys-Gly) (interchain with G-Cter in SUMO)). The dimerization (DIM) stretch occupies residues 56-96; that stretch reads DSEDERFPVCIREAVSQVLNGYDWTLVPMPVRVNGGSKSKP. Residues 98–166 constitute a DNA-binding region (HMG box); the sequence is VKRPMNAFMV…QHKKDHPDYK (69 aa). A compositionally biased stretch (basic and acidic residues) spans 153–167; that stretch reads RLRMQHKKDHPDYKY. Residues 213 to 226 are compositionally biased toward polar residues; it reads SDGNSEHSTGQSHG. Residues 217–303 form a transactivation domain (TAM) region; the sequence is SEHSTGQSHG…NGHAGHPSHI (87 aa). Over residues 243–257 the composition is skewed to basic and acidic residues; the sequence is SDGKRDGSHALREGG. The interval 337–446 is transactivation domain (TAC); sequence KAQVKTESSS…QPVYTTLSRP (110 aa). A Glycyl lysine isopeptide (Lys-Gly) (interchain with G-Cter in SUMO) cross-link involves residue K341. The tract at residues 421–446 is disordered; the sequence is SDPPSVAQSHSPTHWEQPVYTTLSRP. Residues 426 to 446 show a composition bias toward polar residues; it reads VAQSHSPTHWEQPVYTTLSRP.

Interacts with the sumoylation factors ube2i/ubc9 and sumo1. Post-translationally, sumoylated. In terms of tissue distribution, first expressed at stages 13/14 at the lateral edges of the neural plate, in the neural crest forming region. By stage 22, neural crest cells migrate in the cranial region and strong expression is seen in the crest cells that populate the branchial arches as well as those migrating in the frontonasal region. Also strongly expressed in the trunk neural crest. Expression in the otic vesicle begins around stage 25 and persists until at least stage 40. At stage 30, expression is down-regulated in the cranial neural crest of the pharyngeal arches but persists in the trunk neural crest, in the otic vesicle and in discrete domains adjacent to the hindbrain. At stage 40, expression is restricted to the otic vesicle, differentiated pigment cells, and in several cranial ganglia.

The protein resides in the cytoplasm. It is found in the nucleus. Its function is as follows. Acts early in neural crest formation, functioning redundantly with the other group E Sox factors sox8 and sox9 to induce neural crest progenitors. Acts downstream of wnt-signaling at the neural plate border. Involved in the specification of neural crest progenitors fated to form the pigment cell lineage. The protein is Transcription factor Sox-10 (sox10) of Xenopus laevis (African clawed frog).